A 436-amino-acid polypeptide reads, in one-letter code: Trigger factor (436 aa).

Positions 163-248 (GDTVNIDFDG…VNEIKYKDVP (86 aa)) constitute a PPIase FKBP-type domain.

It belongs to the FKBP-type PPIase family. Tig subfamily.

The protein localises to the cytoplasm. The catalysed reaction is [protein]-peptidylproline (omega=180) = [protein]-peptidylproline (omega=0). Involved in protein export. Acts as a chaperone by maintaining the newly synthesized protein in an open conformation. Functions as a peptidyl-prolyl cis-trans isomerase. In Staphylococcus saprophyticus subsp. saprophyticus (strain ATCC 15305 / DSM 20229 / NCIMB 8711 / NCTC 7292 / S-41), this protein is Trigger factor.